The chain runs to 132 residues: Transmembrane protein C1orf162 homolog (132 aa).

Residues 36-56 traverse the membrane as a helical segment; the sequence is IILAFFAGVLLTLLIVALIFL. The interval 95–132 is disordered; sequence TFKPPEENSNDLTRNHSSGLEPTIYSQIKVTDSDLPLP. Residues 104–124 show a composition bias toward polar residues; it reads NDLTRNHSSGLEPTIYSQIKV. At Ser111 the chain carries Phosphoserine.

The protein resides in the membrane. This Mus musculus (Mouse) protein is Transmembrane protein C1orf162 homolog.